A 98-amino-acid chain; its full sequence is MSLVYMNIIMAFTTSLVGLLMYRSHLMSSLLCLEGMMLSLFIMATLIILNAHFTLASMMPIILLVFAACEAALGLSLLVMVSNTYGTDYVQSLNLLQC.

3 consecutive transmembrane segments (helical) span residues 1 to 21 (MSLVYMNIIMAFTTSLVGLLM), 29 to 49 (SLLCLEGMMLSLFIMATLIIL), and 61 to 81 (IILLVFAACEAALGLSLLVMV).

Belongs to the complex I subunit 4L family. In terms of assembly, core subunit of respiratory chain NADH dehydrogenase (Complex I) which is composed of 45 different subunits.

The protein localises to the mitochondrion inner membrane. It catalyses the reaction a ubiquinone + NADH + 5 H(+)(in) = a ubiquinol + NAD(+) + 4 H(+)(out). Functionally, core subunit of the mitochondrial membrane respiratory chain NADH dehydrogenase (Complex I) which catalyzes electron transfer from NADH through the respiratory chain, using ubiquinone as an electron acceptor. Part of the enzyme membrane arm which is embedded in the lipid bilayer and involved in proton translocation. This chain is NADH-ubiquinone oxidoreductase chain 4L (MT-ND4L), found in Hippopotamus amphibius (Hippopotamus).